The primary structure comprises 706 residues: Probable cyclic nucleotide-gated ion channel 3 (706 aa).

Residues 1 to 85 (MMNPQRNKFV…NDSYLQSWNK (85 aa)) are Cytoplasmic-facing. A helical transmembrane segment spans residues 86 to 106 (IFLLLSVVALAFDPLFFYIPY). At 107–119 (VKPERFCLNLDKK) the chain is on the extracellular side. The helical transmembrane segment at 120 to 140 (LQTIACVFRTFIDAFYVVHML) threads the bilayer. Residues 141 to 174 (FQFHTGFITPSSSGFGRGELNEKHKDIALRYLGS) are Cytoplasmic-facing. A helical membrane pass occupies residues 175–195 (YFLIDLLSILPIPQVVVLAIV). Residues 196-208 (PRMRRPASLVAKE) are Extracellular-facing. Residues 209–229 (LLKWVIFCQYVPRIARIYPLF) form a helical membrane-spanning segment. At 230–247 (KEVTRTSGLVTETAWAGA) the chain is on the cytoplasmic side. Residues 248–268 (ALNLFLYMLASHVFGSFWYLI) traverse the membrane as a helical segment. Over 269 to 371 (SIERKDRCWR…QNLKTSAFEG (103 aa)) the chain is Extracellular. The chain crosses the membrane as a helical span at residues 372–392 (EIIFAIVICISGLVLFALLIG). The Cytoplasmic segment spans residues 393–706 (NMQKYLQSTT…ADPEFPMDET (314 aa)). Residues 477 to 600 (WFQA…KQLR) and D548 contribute to the a nucleoside 3',5'-cyclic phosphate site. Residues 591–606 (YRRLHSKQLRHMFRFY) form a calmodulin-binding region. In terms of domain architecture, IQ spans 611–640 (QTWAACFIQAAWKRHCRRKLSKALREEEGK).

This sequence belongs to the cyclic nucleotide-gated cation channel (TC 1.A.1.5) family. In terms of assembly, homotetramer or heterotetramer.

It localises to the cell membrane. Its function is as follows. Probable cyclic nucleotide-gated ion channel. The polypeptide is Probable cyclic nucleotide-gated ion channel 3 (CNGC3) (Arabidopsis thaliana (Mouse-ear cress)).